We begin with the raw amino-acid sequence, 176 residues long: Inorganic pyrophosphatase (176 aa).

Substrate is bound by residues K30, R44, and Y56. Mg(2+)-binding residues include D66, D71, and D103. Y142 is a substrate binding site.

This sequence belongs to the PPase family. In terms of assembly, homohexamer. Mg(2+) serves as cofactor.

The protein localises to the cytoplasm. The enzyme catalyses diphosphate + H2O = 2 phosphate + H(+). Functionally, catalyzes the hydrolysis of inorganic pyrophosphate (PPi) forming two phosphate ions. The chain is Inorganic pyrophosphatase from Vibrio vulnificus (strain CMCP6).